The primary structure comprises 481 residues: 5-hydroxytryptamine receptor 2B (481 aa).

Residues 1–56 (MALSYRVSELQSTIPEHILQSTFVHVISSNWSGLQTESIPEEMKQIVEEQGNKLHW) lie on the Extracellular side of the membrane. N-linked (GlcNAc...) asparagine glycosylation occurs at N30. The chain crosses the membrane as a helical span at residues 57–79 (AALLILMVIIPTIGGNTLVILAV). Residues 80 to 90 (SLEKKLQYATN) are Cytoplasmic-facing. The chain crosses the membrane as a helical span at residues 91–113 (YFLMSLAVADLLVGLFVMPIALL). At 114–129 (TIMFEAMWPLPLVLCP) the chain is on the extracellular side. C128 and C207 are joined by a disulfide. The chain crosses the membrane as a helical span at residues 130 to 151 (AWLFLDVLFSTASIMHLCAISV). Ergotamine contacts are provided by D135 and T140. The short motif at 152-154 (DRY) is the DRY motif; important for ligand-induced conformation changes element. The Cytoplasmic portion of the chain corresponds to 152–171 (DRYIAIKKPIQANQYNSRAT). Residues 172-192 (AFIKITVVWLISIGIAIPVPI) form a helical membrane-spanning segment. The Extracellular portion of the chain corresponds to 193–216 (KGIETDVDNPNNITCVLTKERFGD). L209 contacts ergotamine. A [DE]RFG motif; may stabilize a conformation that preferentially activates signaling via beta-arrestin family members motif is present at residues 212–215 (ERFG). Residues 217 to 239 (FMLFGSLAAFFTPLAIMIVTYFL) form a helical membrane-spanning segment. At 240–324 (TIHALQKKAY…TISNEQRASK (85 aa)) the chain is on the cytoplasmic side. A helical membrane pass occupies residues 325–345 (VLGIVFFLFLLMWCPFFITNI). Over 346–360 (TLVLCDSCNQTTLQM) the chain is Extracellular. A disulfide bridge connects residues C350 and C353. A helical transmembrane segment spans residues 361–382 (LLEIFVWIGYVSSGVNPLVYTL). Residues 376 to 380 (NPLVY) carry the NPxxY motif; important for ligand-induced conformation changes and signaling motif. Over 383 to 481 (FNKTFRDAFG…DKTEEQVSYV (99 aa)) the chain is Cytoplasmic. C397 carries the S-palmitoyl cysteine lipid modification. The PDZ-binding motif lies at 479 to 481 (SYV).

This sequence belongs to the G-protein coupled receptor 1 family. In terms of assembly, interacts (via C-terminus) with MPDZ. Ubiquitous. Detected in liver, kidney, heart, pulmonary artery, and intestine. Detected at lower levels in blood, placenta and brain, especially in cerebellum, occipital cortex and frontal cortex.

It localises to the cell membrane. The protein resides in the synapse. Its subcellular location is the synaptosome. G-protein coupled receptor for 5-hydroxytryptamine (serotonin). Also functions as a receptor for various ergot alkaloid derivatives and psychoactive substances. Ligand binding causes a conformation change that triggers signaling via guanine nucleotide-binding proteins (G proteins) and modulates the activity of downstream effectors. HTR2B is coupled to G(q)/G(11) G alpha proteins and activates phospholipase C-beta, releasing diacylglycerol (DAG) and inositol 1,4,5-trisphosphate (IP3) second messengers that modulate the activity of phosphatidylinositol 3-kinase and promote the release of Ca(2+) ions from intracellular stores, respectively. Beta-arrestin family members inhibit signaling via G proteins and mediate activation of alternative signaling pathways. Plays a role in the regulation of dopamine and 5-hydroxytryptamine release, 5-hydroxytryptamine uptake and in the regulation of extracellular dopamine and 5-hydroxytryptamine levels, and thereby affects neural activity. May play a role in the perception of pain. Plays a role in the regulation of behavior, including impulsive behavior. Required for normal proliferation of embryonic cardiac myocytes and normal heart development. Protects cardiomyocytes against apoptosis. Plays a role in the adaptation of pulmonary arteries to chronic hypoxia. Plays a role in vasoconstriction. Required for normal osteoblast function and proliferation, and for maintaining normal bone density. Required for normal proliferation of the interstitial cells of Cajal in the intestine. The polypeptide is 5-hydroxytryptamine receptor 2B (Homo sapiens (Human)).